The sequence spans 282 residues: 4-hydroxybenzoate octaprenyltransferase (282 aa).

9 consecutive transmembrane segments (helical) span residues 17-37 (IGIL…NQGF), 40-60 (IDLL…GCVI), 90-110 (AFIL…KLPI), 113-133 (FYFA…KRFL), 135-155 (APQL…FIAS), 163-183 (FVVL…MYAM), 207-227 (LIIA…AINK), 231-251 (WFFY…LKLI), and 262-282 (AFLV…LALI).

Belongs to the UbiA prenyltransferase family. Requires Mg(2+) as cofactor.

It is found in the cell inner membrane. It catalyses the reaction all-trans-octaprenyl diphosphate + 4-hydroxybenzoate = 4-hydroxy-3-(all-trans-octaprenyl)benzoate + diphosphate. It participates in cofactor biosynthesis; ubiquinone biosynthesis. Catalyzes the prenylation of para-hydroxybenzoate (PHB) with an all-trans polyprenyl group. Mediates the second step in the final reaction sequence of ubiquinone-8 (UQ-8) biosynthesis, which is the condensation of the polyisoprenoid side chain with PHB, generating the first membrane-bound Q intermediate 3-octaprenyl-4-hydroxybenzoate. This Legionella pneumophila (strain Paris) protein is 4-hydroxybenzoate octaprenyltransferase.